Here is a 462-residue protein sequence, read N- to C-terminus: Argininosuccinate lyase (462 aa).

This sequence belongs to the lyase 1 family. Argininosuccinate lyase subfamily.

It localises to the cytoplasm. It catalyses the reaction 2-(N(omega)-L-arginino)succinate = fumarate + L-arginine. The protein operates within amino-acid biosynthesis; L-arginine biosynthesis; L-arginine from L-ornithine and carbamoyl phosphate: step 3/3. This is Argininosuccinate lyase from Dechloromonas aromatica (strain RCB).